A 271-amino-acid polypeptide reads, in one-letter code: Transcription factor PU.1 (271 aa).

The tract at residues 124-164 (LSPAHQQSSDEEEGERQSPPLEVSDGEADGLEPGPGLLHGE) is disordered. Phosphoserine occurs at positions 141 and 147. The span at 154–164 (LEPGPGLLHGE) shows a compositional bias: low complexity. The segment at residues 171 to 254 (IRLYQFLLDL…VKKKLTYQFS (84 aa)) is a DNA-binding region (ETS). Positions 218, 231, 234, and 244 each coordinate DNA.

This sequence belongs to the ETS family. As to quaternary structure, binds DNA as a monomer. Can form homomers. Directly interacts with CEBPD/NF-IL6-beta; this interaction does not affect DNA-binding properties of each partner. Interacts with NONO/p54(nrb). Interacts with RUNX1/AML1. Interacts with GFI1; the interaction represses SPI1 transcriptional activity, hence blocks SPI1-induced macrophage differentiation of myeloid progenitor cells. Interacts with CEBPE. Interacts with IRF4/Pip and IRF8. Interacts with JUN. Interacts with RB1. Interacts with TBP.

The protein localises to the nucleus. Its activity is regulated as follows. Transcriptional activity at macrophage-specific genes is inhibited by interaction with GFI1, which results in the inhibition of SPI1-induced macrophage differentiation of myeloid progenitor cells, but not that of the granulocyte lineage. Its function is as follows. Pioneer transcription factor, which controls hematopoietic cell fate by decompacting stem cell heterochromatin and allowing other transcription factors to enter otherwise inaccessible genomic sites. Once in open chromatin, can directly control gene expression by binding genetic regulatory elements and can also more broadly influence transcription by recruiting transcription factors, such as interferon regulatory factors (IRFs), to otherwise inaccessible genomic regions. Transcriptionally activates genes important for myeloid and lymphoid lineages, such as CSF1R or FCER1A. Transcriptional activation from certain promoters, possibly containing low affinity binding sites, is achieved cooperatively with other transcription factors. FCER1A transactivation is achieved in cooperation with GATA1. May be particularly important for the pro- to pre-B cell transition. Binds (via the ETS domain) onto the purine-rich DNA core sequence 5'-GAGGAA-3', also known as the PU-box. In vitro can bind RNA and interfere with pre-mRNA splicing. The sequence is that of Transcription factor PU.1 (Spi1) from Rattus norvegicus (Rat).